Reading from the N-terminus, the 786-residue chain is Cadherin-9 (786 aa).

The signal sequence occupies residues 1 to 21 (MRTYSCLQLVIWTCIFHMVDN). N-linked (GlcNAc...) asparagine glycosylation occurs at Asn-21. Positions 22–52 (STLQGKDSSHFLRRIVNLKKDEGKMLHRAKR) are excised as a propeptide. Residues 22-614 (STLQGKDSSH…MLAAGLSTGA (593 aa)) lie on the Extracellular side of the membrane. Cadherin domains follow at residues 54 to 158 (WMWN…EPKF), 159 to 267 (TKDL…PPRF), 268 to 382 (PQST…PPVF), 383 to 487 (SKLS…APEF), and 487 to 604 (FATY…AEAL). A glycan (N-linked (GlcNAc...) asparagine) is linked at Asn-254. N-linked (GlcNAc...) asparagine glycosylation is found at Asn-454 and Asn-535. The helical transmembrane segment at 615–635 (LIAILLCVVILLTLIVLFAAL) threads the bilayer. The Cytoplasmic portion of the chain corresponds to 636-786 (KRQRKKEPLI…AEMYGGNDSD (151 aa)). Ser-785 is modified (phosphoserine).

It localises to the cell membrane. Its function is as follows. Cadherins are calcium-dependent cell adhesion proteins. They preferentially interact with themselves in a homophilic manner in connecting cells; cadherins may thus contribute to the sorting of heterogeneous cell types. This is Cadherin-9 (Cdh9) from Mus musculus (Mouse).